The primary structure comprises 274 residues: Thiazole synthase (274 aa).

Residue K111 is the Schiff-base intermediate with DXP of the active site. 1-deoxy-D-xylulose 5-phosphate-binding positions include G172, A198–G199, and N220–T221.

This sequence belongs to the ThiG family. In terms of assembly, homotetramer. Forms heterodimers with either ThiH or ThiS.

Its subcellular location is the cytoplasm. The enzyme catalyses [ThiS sulfur-carrier protein]-C-terminal-Gly-aminoethanethioate + 2-iminoacetate + 1-deoxy-D-xylulose 5-phosphate = [ThiS sulfur-carrier protein]-C-terminal Gly-Gly + 2-[(2R,5Z)-2-carboxy-4-methylthiazol-5(2H)-ylidene]ethyl phosphate + 2 H2O + H(+). It functions in the pathway cofactor biosynthesis; thiamine diphosphate biosynthesis. Catalyzes the rearrangement of 1-deoxy-D-xylulose 5-phosphate (DXP) to produce the thiazole phosphate moiety of thiamine. Sulfur is provided by the thiocarboxylate moiety of the carrier protein ThiS. In vitro, sulfur can be provided by H(2)S. The protein is Thiazole synthase of Gloeobacter violaceus (strain ATCC 29082 / PCC 7421).